A 380-amino-acid polypeptide reads, in one-letter code: Erythronate-4-phosphate dehydrogenase (380 aa).

Residues S45 and T66 each coordinate substrate. NAD(+)-binding positions include 126-127 (QV), D146, T175, 206-208 (ASR), and D232. The active site involves R208. E237 is a catalytic residue. H254 (proton donor) is an active-site residue. Residue G257 participates in NAD(+) binding. Y258 provides a ligand contact to substrate.

Belongs to the D-isomer specific 2-hydroxyacid dehydrogenase family. PdxB subfamily. Homodimer.

Its subcellular location is the cytoplasm. The catalysed reaction is 4-phospho-D-erythronate + NAD(+) = (R)-3-hydroxy-2-oxo-4-phosphooxybutanoate + NADH + H(+). It participates in cofactor biosynthesis; pyridoxine 5'-phosphate biosynthesis; pyridoxine 5'-phosphate from D-erythrose 4-phosphate: step 2/5. Catalyzes the oxidation of erythronate-4-phosphate to 3-hydroxy-2-oxo-4-phosphonooxybutanoate. The chain is Erythronate-4-phosphate dehydrogenase from Pseudomonas aeruginosa (strain UCBPP-PA14).